The following is a 941-amino-acid chain: MPTWRYIFSLRSKSSFTKTWVPFTQIRNSSKSPKVGQKPILQGALGPPLDFIRPKEKVTLPPLLKEVSFQQKKFADCVLLTKVGNFYEMYFEQAEKIGPLLNLRVSKKKTSKSDVSMAGFPFFKLDRYLKILVEDLKKCVALSEEVIRPVDDLSSKNMYIRSVTRVITPGTLIDENFMNPYESNYILTVVFDPNFFSSDISNQGTAEDKDCFADCKIGLSWLDLSTGEFFTQDSNLQRLAGDLTRISPREIVLDESLKSFTTHPIYSFIQERKYFLSYVENRYQSLDCWNKFLEKEIDPSFIKYCTKLEVTAGCTLISYIADRLQNSHPNIQPPIRVSLNEYMIIGESAMKGLEIRSSLYQNRYTGSLLHAINKTVTKSGSRLLTRRLCAPSTNIVEINNRLDLVEKFKLLPELCSKVINLLKKSNDTHRILQHLLMGRGNSYDLLKMADNFSITKEIHSLLSPLESSSAFRLLLLNMHPHDELKQLINNAVDENALMKQKINEEEETEVIAQEAEEILQDENAQVEIVKKSLSSEFDIRQSFKENWVVKSNFNNNLRKLHEKLQSLFASYDKLQEDLSKRLGKKATLRKSPAKLYYVHLKLSGNETIERFIKKFTQAVLFQSTKSTASFQLPGWTSLGMDLENTKLHIHQEEQRVLKSITDEIVSHHKTLRSLANALDELDISTSLATLAQEQDFVRPVVDDSHAHTVIQGRHPIVEKGLSHKLIPFTPNDCFVGNGNVNIWLITGPNMAGKSTFLRQNAIISILAQIGSFVPASNARIGIVDQIFSRIGSADNLYQQKSTFMVEMMETSFILKNATRRSFVIMDEIGRGTTASDGIAIAYGCLKYLSTINHSRTLFATHAHQLTNLTKSFKNVECYCTNLSIDRDDHTFSFDYKLKKGVNYQSHGLKVAEMAGIPKNVLLAAEEVLTLLPNTSKPTSMK.

747-754 (GPNMAGKS) is a binding site for ATP.

It belongs to the DNA mismatch repair MutS family.

It localises to the cytoplasm. Its subcellular location is the mitochondrion. Functionally, involved in mitochondrial DNA repair. In Schizosaccharomyces pombe (strain 972 / ATCC 24843) (Fission yeast), this protein is MutS protein homolog 1 (msh1).